Reading from the N-terminus, the 233-residue chain is 3-dehydroquinate dehydratase (233 aa).

3-dehydroquinate contacts are provided by residues 34-36 (ELR) and Arg64. The Proton donor/acceptor role is filled by His118. Catalysis depends on Lys145, which acts as the Schiff-base intermediate with substrate. Residues Arg185, Ser205, and Gln209 each contribute to the 3-dehydroquinate site.

The protein belongs to the type-I 3-dehydroquinase family. Homodimer.

It catalyses the reaction 3-dehydroquinate = 3-dehydroshikimate + H2O. The protein operates within metabolic intermediate biosynthesis; chorismate biosynthesis; chorismate from D-erythrose 4-phosphate and phosphoenolpyruvate: step 3/7. Functionally, involved in the third step of the chorismate pathway, which leads to the biosynthesis of aromatic amino acids. Catalyzes the cis-dehydration of 3-dehydroquinate (DHQ) and introduces the first double bond of the aromatic ring to yield 3-dehydroshikimate. The sequence is that of 3-dehydroquinate dehydratase from Coxiella burnetii (strain CbuG_Q212) (Coxiella burnetii (strain Q212)).